A 324-amino-acid chain; its full sequence is Phospho-N-acetylmuramoyl-pentapeptide-transferase (324 aa).

The next 10 membrane-spanning stretches (helical) occupy residues 9–29 (TFAV…PFLV), 53–73 (TMGA…FSFI), 77–97 (VSAA…LGFL), 117–137 (FLGQ…SDFA), 149–169 (IDLG…FSNA), 176–196 (LDGL…VIAF), 201–221 (MDVA…LLFN), 227–247 (IFMG…VSIL), 253–273 (LLLL…LQVF), and 304–324 (VLTF…VVIF).

The protein belongs to the glycosyltransferase 4 family. MraY subfamily. Mg(2+) is required as a cofactor.

Its subcellular location is the cell membrane. The catalysed reaction is UDP-N-acetyl-alpha-D-muramoyl-L-alanyl-gamma-D-glutamyl-meso-2,6-diaminopimeloyl-D-alanyl-D-alanine + di-trans,octa-cis-undecaprenyl phosphate = di-trans,octa-cis-undecaprenyl diphospho-N-acetyl-alpha-D-muramoyl-L-alanyl-D-glutamyl-meso-2,6-diaminopimeloyl-D-alanyl-D-alanine + UMP. It functions in the pathway cell wall biogenesis; peptidoglycan biosynthesis. In terms of biological role, catalyzes the initial step of the lipid cycle reactions in the biosynthesis of the cell wall peptidoglycan: transfers peptidoglycan precursor phospho-MurNAc-pentapeptide from UDP-MurNAc-pentapeptide onto the lipid carrier undecaprenyl phosphate, yielding undecaprenyl-pyrophosphoryl-MurNAc-pentapeptide, known as lipid I. The chain is Phospho-N-acetylmuramoyl-pentapeptide-transferase from Listeria innocua serovar 6a (strain ATCC BAA-680 / CLIP 11262).